A 238-amino-acid chain; its full sequence is DNA damage-regulated autophagy modulator protein 1 (238 aa).

Helical transmembrane passes span 9–29, 53–73, 91–111, 116–136, 161–181, and 200–220; these read AFVP…SYVV, SGIF…TMYT, VFNL…GIVA, LAVP…GVVY, MAIS…ASLI, and VSAI…LTFI.

The protein belongs to the DRAM/TMEM150 family.

It is found in the lysosome membrane. Functionally, lysosomal modulator of autophagy that plays a central role in p53/TP53-mediated apoptosis. Not involved in p73/TP73-mediated autophagy. The sequence is that of DNA damage-regulated autophagy modulator protein 1 (Dram1) from Mus musculus (Mouse).